Reading from the N-terminus, the 56-residue chain is Serine protease inhibitor Kazal-type 1 (56 aa).

One can recognise a Kazal-like domain in the interval 3–56 (LGREAKCNNNAGGCTKIYNPVCGTDGNTYPNECMLCVENQKRQMPVLIQRSGPC). Intrachain disulfides connect Cys9–Cys38, Cys16–Cys35, and Cys24–Cys56.

The protein localises to the secreted. Its function is as follows. Serine protease inhibitor which exhibits anti-trypsin activity. In the pancreas, protects against trypsin-catalyzed premature activation of zymogens. In terms of biological role, in the male reproductive tract, binds to sperm heads where it modulates sperm capacitance by inhibiting calcium uptake and nitrogen oxide (NO) production. This chain is Serine protease inhibitor Kazal-type 1 (SPINK1), found in Equus caballus (Horse).